Here is a 255-residue protein sequence, read N- to C-terminus: Taurine import ATP-binding protein TauB (255 aa).

One can recognise an ABC transporter domain in the interval 2–229; sequence LQISHLYADY…RFVAGESSRS (228 aa). 34 to 41 is an ATP binding site; sequence GPSGCGKT.

This sequence belongs to the ABC transporter superfamily. Taurine importer (TC 3.A.1.17.1) family. The complex is composed of two ATP-binding proteins (TauB), two transmembrane proteins (TauC) and a solute-binding protein (TauA).

Its subcellular location is the cell inner membrane. It carries out the reaction taurine(out) + ATP + H2O = taurine(in) + ADP + phosphate + H(+). In terms of biological role, part of the ABC transporter complex TauABC involved in taurine import. Responsible for energy coupling to the transport system. This Shigella flexneri protein is Taurine import ATP-binding protein TauB.